A 334-amino-acid chain; its full sequence is D-fructose 1,6-bisphosphatase class 2/sedoheptulose 1,7-bisphosphatase (334 aa).

The Mn(2+) site is built by D33, E57, D85, and E88. Substrate contacts are provided by residues 88–90, Y119, 164–166, and 186–188; these read EGT, RAR, and DGD. Mn(2+) is bound at residue E213.

This sequence belongs to the FBPase class 2 family. In terms of assembly, homotetramer. The cofactor is Mn(2+).

The catalysed reaction is beta-D-fructose 1,6-bisphosphate + H2O = beta-D-fructose 6-phosphate + phosphate. It carries out the reaction D-sedoheptulose 1,7-bisphosphate + H2O = D-sedoheptulose 7-phosphate + phosphate. The protein operates within carbohydrate biosynthesis; Calvin cycle. In terms of biological role, catalyzes the hydrolysis of fructose 1,6-bisphosphate (Fru 1,6-P2) and sedoheptulose 1,7-bisphosphate (Sed 1,7-P2) to fructose 6-phosphate and sedoheptulose 7-phosphate, respectively. The protein is D-fructose 1,6-bisphosphatase class 2/sedoheptulose 1,7-bisphosphatase of Prochlorococcus marinus (strain MIT 9313).